Reading from the N-terminus, the 283-residue chain is Short-chain dehydrogenase anuB (283 aa).

NADP(+) is bound by residues Thr-57, Asp-78, Asn-106, Tyr-166, Lys-170, Val-199, and Thr-201. The active-site Proton acceptor is Tyr-166. Tyr-166 (proton donor) is an active-site residue. Lys-170 serves as the catalytic Lowers pKa of active site Tyr.

This sequence belongs to the short-chain dehydrogenases/reductases (SDR) family.

The protein operates within secondary metabolite biosynthesis. Functionally, highly reducing polyketide synthase; part of the gene cluster that mediates the biosynthesis of annullatin D, an alkylated aromatic polyketide with a fused dihydrobenzofuran lactone ring system that exhibits potent agonistic activities toward the cannabinoid receptors. The annullatin backbone 2-hydroxymethyl-3-pentylphenol is assembled from one acetyl-CoA starter unit and 5 malonyl-CoA elongation units by cooperation of the highly reducing polyketide synthase anuA, the short-chain dehydrogenase anuB and the oxidoreductase anuC, before being hydroxylated at the C-5 alkyl chain by the cytochrome P450 monooxygenase anuE to form (8S)-annullatin E. The prenyltransferase anuH subsequently installs one isoprenyl group at the benzene ring to form (8S)-annullatin J. Enzymatic or nonenzymatic dihydro-benzofuran ring formation between the prenyl and the phenolic hydroxyl groups in (8S)-annullatin J results in two diastereomers (2S,9S)-annullatin H and compound 12. The intermediate (2S,9S)-annullatin H is then converted to (2S,9S)-annullatin D by the FAD-linked oxidoreductase anuG-catalyzed five-member lactone ring formation. The isomer 12 acts as a substrate for the short-chain dehydrogenase anuF and is oxidized to (2R)-annullatin F, which is subsequently acetylated by an acetyltransferase leading to (2R)-annullatin G formation. The remaining enzymes identified within the cluster, anuD, anuI and anuJ, seem not to be involved in annullatin biosynthesis. This is Short-chain dehydrogenase anuB from Penicillium roqueforti (strain FM164).